Reading from the N-terminus, the 231-residue chain is MTITIALPSKGRMKDDASAIFERAGMPITAVGNDRSYRGRVEGWDDVEVAFLSASEISRELGNGTVDFGVTGEDLMREGFAEVDKRVEFCARLGFGHADVVVAVPEIWLDVETMADLGDVAADFRARHSRRLAIATKYWRLTQQFFSSQHGIQLYRIVESLGATEGAPASGSADIIVDITSTGSTLRANHLKVLQDGVILHSQACLVRARKESHADEPVVQAIIEAVRAAL.

Belongs to the ATP phosphoribosyltransferase family. Short subfamily. As to quaternary structure, heteromultimer composed of HisG and HisZ subunits.

It is found in the cytoplasm. The enzyme catalyses 1-(5-phospho-beta-D-ribosyl)-ATP + diphosphate = 5-phospho-alpha-D-ribose 1-diphosphate + ATP. It participates in amino-acid biosynthesis; L-histidine biosynthesis; L-histidine from 5-phospho-alpha-D-ribose 1-diphosphate: step 1/9. Its function is as follows. Catalyzes the condensation of ATP and 5-phosphoribose 1-diphosphate to form N'-(5'-phosphoribosyl)-ATP (PR-ATP). Has a crucial role in the pathway because the rate of histidine biosynthesis seems to be controlled primarily by regulation of HisG enzymatic activity. This chain is ATP phosphoribosyltransferase (hisG), found in Rhizobium etli (strain CIAT 652).